The primary structure comprises 322 residues: Basic 30 kDa endochitinase (322 aa).

An N-terminal signal peptide occupies residues 1–22 (MRLSEFTTLFLLFSVLLLSASA). Residues 23–64 (EQCGSQAGGALCASGLCCSKFGWCGNTNEYCGPGNCQSQCPG) enclose the Chitin-binding type-1 domain. 4 cysteine pairs are disulfide-bonded: cysteine 25-cysteine 40, cysteine 34-cysteine 46, cysteine 39-cysteine 53, and cysteine 58-cysteine 62. Proline 66 and proline 68 each carry 4-hydroxyproline. 3 disulfide bridges follow: cysteine 93–cysteine 156, cysteine 168–cysteine 176, and cysteine 275–cysteine 307. Glutamate 138 functions as the Proton donor in the catalytic mechanism. Positions 316–322 (GLLVDIM) are cleaved as a propeptide — removed in mature form.

Belongs to the glycosyl hydrolase 19 family. Chitinase class I subfamily. Post-translationally, the 4-hydroxyproline residues are not glycosylated in this plant vacuolar protein.

Its subcellular location is the vacuole. It is found in the secreted. The protein localises to the cell wall. It catalyses the reaction Random endo-hydrolysis of N-acetyl-beta-D-glucosaminide (1-&gt;4)-beta-linkages in chitin and chitodextrins.. Defense against chitin-containing fungal pathogens. This is Basic 30 kDa endochitinase (CHI9) from Solanum lycopersicum (Tomato).